Consider the following 169-residue polypeptide: Neurotensin/neuromedin N (169 aa).

The signal sequence occupies residues 1 to 22 (MRGMNLQLVCLTLLAFSSWSLC).

This sequence belongs to the neurotensin family. In terms of assembly, interacts with NTSR1. Interacts with SORT1. Interacts with SORL1. In terms of processing, neurotensin is cleaved and degraded by Angiotensin-converting enzyme (ACE) and neprilysin (MME).

The protein resides in the secreted. It localises to the cytoplasmic vesicle. It is found in the secretory vesicle. Functionally, neurotensin may play an endocrine or paracrine role in the regulation of fat metabolism. It causes contraction of smooth muscle. The polypeptide is Neurotensin/neuromedin N (Nts) (Mus musculus (Mouse)).